A 733-amino-acid polypeptide reads, in one-letter code: Catalase-peroxidase (733 aa).

The segment at 1-24 (MTDDSTCPVTGGADKQVTGRGQSY) is disordered. A cross-link (tryptophyl-tyrosyl-methioninium (Trp-Tyr) (with M-245)) is located at residues 96–219 (WHSAGTYRTL…LAAVQMGLIY (124 aa)). Catalysis depends on His-97, which acts as the Proton acceptor. The segment at residues 219–245 (YVNPEGPNGKPDPVAAAKDIRETFARM) is a cross-link (tryptophyl-tyrosyl-methioninium (Tyr-Met) (with W-96)). His-260 contributes to the heme b binding site.

It belongs to the peroxidase family. Peroxidase/catalase subfamily. Homodimer or homotetramer. Heme b serves as cofactor. Post-translationally, formation of the three residue Trp-Tyr-Met cross-link is important for the catalase, but not the peroxidase activity of the enzyme.

It carries out the reaction H2O2 + AH2 = A + 2 H2O. The catalysed reaction is 2 H2O2 = O2 + 2 H2O. Functionally, bifunctional enzyme with both catalase and broad-spectrum peroxidase activity. In Methanoregula boonei (strain DSM 21154 / JCM 14090 / 6A8), this protein is Catalase-peroxidase.